Reading from the N-terminus, the 992-residue chain is Meckelin (992 aa).

An N-terminal signal peptide occupies residues 1 to 35; sequence MVMRTRPLAAMAVRSCFSALTGTVYLLLVLCEVSW. Residues 36–516 lie on the Extracellular side of the membrane; the sequence is AQIFSFPFQR…SVKYEMNQGD (481 aa). Positions 37 to 280 are cysteine-rich; it reads QIFSFPFQRP…FHYVFEGAAG (244 aa). 12 cysteine pairs are disulfide-bonded: C49/C62, C65/C78, C80/C97, C100/C114, C117/C127, C129/C150, C153/C170, C173/C184, C186/C197, C237/C246, C253/C268, and C354/C375. An N-linked (GlcNAc...) asparagine glycan is attached at N242. A helical membrane pass occupies residues 517–545; it reads AFVQTDIALGVLGGLAVLSSLLKTAGWKR. The Cytoplasmic portion of the chain corresponds to 546–555; that stretch reads RIGSPMIDLQ. Residues 556 to 587 form a helical membrane-spanning segment; sequence TVMKFLLYYAGDLANVFFIITVGTGLYWLIFF. Over 588 to 600 the chain is Extracellular; sequence KAQKSVSVLLPMP. A helical membrane pass occupies residues 601–628; it reads VQEERFVTYVGCAFAMKALQFLHKLISQ. The Cytoplasmic segment spans residues 629–667; sequence ITIDIFFIDWERPKGKVLKAVEGEGGVRSATVPVSIWRT. The segment at residues 668 to 676 is an intramembrane region (helical); it reads YFVANEWNE. Residues 668–698 traverse the membrane as a discontinuously helical segment; that stretch reads YFVANEWNEIQTVRKINPLFQVLTTLFFLEV. The stretch at 677 to 685 is an intramembrane region; sequence IQTVRKINP. The segment at residues 686–698 is an intramembrane region (helical); it reads LFQVLTTLFFLEV. The Extracellular portion of the chain corresponds to 699–728; it reads VGFKNLALMDPSSSLSRSLSDYAAPYSRIL. The helical intramembrane region spans 729 to 754; it reads RYAVATTIWLVIGIVQVVFFAAFYER. Residues 729–768 form a discontinuously helical membrane-spanning segment; it reads RYAVATTIWLVIGIVQVVFFAAFYERFIEDKIRQFVDLCS. Residues 755 to 759 lie within the membrane without spanning it; the sequence is FIEDK. Residues 760-768 constitute an intramembrane region (helical); the sequence is IRQFVDLCS. The Cytoplasmic segment spans residues 769–923; that stretch reads MSNVSVFLLS…SIFYNDESHS (155 aa). Residues 924–926 constitute an intramembrane region (helical); sequence FSS. Residues 924 to 949 traverse the membrane as a discontinuously helical segment; sequence FSSVLYYGNEATLLIFDLLFFCVVDL. An intramembrane segment occupies 927 to 933; sequence VLYYGNE. The segment at residues 934 to 949 is an intramembrane region (helical); that stretch reads ATLLIFDLLFFCVVDL. Over 950 to 954 the chain is Extracellular; sequence ACQNF. The chain crosses the membrane as a helical span at residues 955 to 982; it reads VLASFLTYLQQEIFRFIRNTVGQKNLAT. Residues 983–992 lie on the Cytoplasmic side of the membrane; that stretch reads KTLVDERFLI.

In terms of assembly, homodimer. Part of the tectonic-like complex (also named B9 complex). Interacts with DNAJB9, DNAJC10 and mutated SFTPC. Interacts with SYNE2 during the early establishment of cell polarity. Interacts (via C-terminus) with FLNA. Interacts with TMEM218. Interacts with WNT5A. Interacts with ROR2.

The protein resides in the cell membrane. Its subcellular location is the endoplasmic reticulum membrane. It localises to the cytoplasm. The protein localises to the cytoskeleton. It is found in the cilium basal body. Its function is as follows. Part of the tectonic-like complex which is required for tissue-specific ciliogenesis and may regulate ciliary membrane composition. Involved in centrosome migration to the apical cell surface during early ciliogenesis. Required for ciliary structure and function, including a role in regulating length and appropriate number through modulating centrosome duplication. Is a key regulator of stereociliary bundle orientation. Required for epithelial cell branching morphology. Essential for endoplasmic reticulum-associated degradation (ERAD) of surfactant protein C (sftpc). Involved in the negative regulation of canonical Wnt signaling, and activation of the non-canonical cascade stimulated by WNT5A. In non-canonical Wnt signaling, it may act as ROR2 coreceptor. The sequence is that of Meckelin (Tmem67) from Rattus norvegicus (Rat).